The primary structure comprises 183 residues: 1,6-anhydro-N-acetylmuramyl-L-alanine amidase AmpD (183 aa).

Residues 30–167 (LLVVHNISLP…APDRKTDPGP (138 aa)) form the N-acetylmuramoyl-L-alanine amidase domain. A Zn(2+)-binding site is contributed by H34. E116 acts as the Proton acceptor in catalysis. Residues H154 and D164 each contribute to the Zn(2+) site.

The protein belongs to the N-acetylmuramoyl-L-alanine amidase 2 family. Zn(2+) is required as a cofactor.

Its subcellular location is the cytoplasm. It carries out the reaction Hydrolyzes the link between N-acetylmuramoyl residues and L-amino acid residues in certain cell-wall glycopeptides.. In terms of biological role, involved in cell wall peptidoglycan recycling. Specifically cleaves the amide bond between the lactyl group of N-acetylmuramic acid and the alpha-amino group of the L-alanine in degradation products containing an anhydro N-acetylmuramyl moiety. Is also involved in beta-lactamase induction. The sequence is that of 1,6-anhydro-N-acetylmuramyl-L-alanine amidase AmpD (ampD) from Escherichia coli (strain K12).